Consider the following 144-residue polypeptide: uncharacterized protein (144 aa).

Polar residues predominate over residues 125–135 (PQQQNNHQLQS). The disordered stretch occupies residues 125–144 (PQQQNNHQLQSKPKAASISR).

This is an uncharacterized protein from Rickettsia prowazekii (strain Madrid E).